The following is a 92-amino-acid chain: UPF0213 protein M28_Spy1146 (92 aa).

The GIY-YIG domain maps to lysine 4 to alanine 80.

This sequence belongs to the UPF0213 family.

The polypeptide is UPF0213 protein M28_Spy1146 (Streptococcus pyogenes serotype M28 (strain MGAS6180)).